The chain runs to 347 residues: Actin-like protein MamK (347 aa).

ATP-binding positions include K9, 20–21, and D76; that span reads TS. E143 provides a ligand contact to Mg(2+). Residues 164–166, 218–222, and G289 contribute to the ATP site; these read AGT and KEQFS.

Belongs to the FtsA/MreB family. MamK subfamily. As to quaternary structure, forms cytoplasmic filaments. Filaments are parallel (polar) and double-helical. MamK subunits from each of the two strands are juxtaposed, each monomer binds ADP. At cell poles and septa interacts with methyl-accepting chemotaxis protein Amb0944 (MCP10). Forms filaments with MamK-like protein.

The protein localises to the cytoplasm. Its subcellular location is the cytoskeleton. The protein resides in the magnetosome membrane. It catalyses the reaction ATP + H2O = ADP + phosphate + H(+). With respect to regulation, filament turnover is promoted by MamJ and/or LimJ which have overlapping function; at least one other protein is required for turnover. MamK filament dynamics are probably required for the assembly or maintenance of the magnetosome chain. In terms of biological role, protein with ATPase activity which forms dynamic cytoplasmic filaments (probably with paralog MamK-like) that organize magnetosomes into long chains running parallel to the long axis of the cell. Turnover of MamK filaments is probably promoted by MamK-like, which provides a monomer pool. Forms twisted filaments in the presence of ATP or GTP. Serves to close gaps between magnetosomes in the chain. Interaction with MCP10 is involved in controlling the response to magnetic fields, possibly by controlling flagellar rotation. Expression in E.coli yields a filament in the cell's longitudinal axis; the protein nucleates at several sites and one extremity of the filament is located at the cell pole. The chain is Actin-like protein MamK (mamK) from Paramagnetospirillum magneticum (strain ATCC 700264 / AMB-1) (Magnetospirillum magneticum).